Consider the following 245-residue polypeptide: tRNA pseudouridine synthase A (245 aa).

Residue Asp52 is the Nucleophile of the active site. Tyr111 is a binding site for substrate.

The protein belongs to the tRNA pseudouridine synthase TruA family. Homodimer.

The enzyme catalyses uridine(38/39/40) in tRNA = pseudouridine(38/39/40) in tRNA. Its function is as follows. Formation of pseudouridine at positions 38, 39 and 40 in the anticodon stem and loop of transfer RNAs. The protein is tRNA pseudouridine synthase A of Rhodopseudomonas palustris (strain HaA2).